A 441-amino-acid polypeptide reads, in one-letter code: Protein disulfide isomerase-like 2-3 (441 aa).

The signal sequence occupies residues 1 to 18 (MRPAVAAALLLVAAAVAA). Thioredoxin domains are found at residues 19 to 139 (SPVS…ALLR) and 159 to 276 (SEKT…ANAA). Active-site nucleophile residues include C59 and C62. C59 and C62 are oxidised to a cystine. Residues 143 to 166 (NGKTSAGSGGKKSGGSSEKTEPSA) form a disordered region. Residues C195 and C198 each act as nucleophile in the active site. C195 and C198 form a disulfide bridge.

Belongs to the protein disulfide isomerase family.

The protein localises to the endoplasmic reticulum lumen. It catalyses the reaction Catalyzes the rearrangement of -S-S- bonds in proteins.. In terms of biological role, acts as a protein-folding catalyst that interacts with nascent polypeptides to catalyze the formation, isomerization, and reduction or oxidation of disulfide bonds. May play a role in storage protein biogenesis. This is Protein disulfide isomerase-like 2-3 (PDIL2-3) from Oryza sativa subsp. japonica (Rice).